A 401-amino-acid chain; its full sequence is Large ribosomal subunit protein uL4 (401 aa).

The protein belongs to the universal ribosomal protein uL4 family.

In Drosophila melanogaster (Fruit fly), this protein is Large ribosomal subunit protein uL4 (RpL4).